The sequence spans 907 residues: Protein translocase subunit SecA (907 aa).

ATP is bound by residues Q87, 105–109 (GEGKT), and D512. The interval 862-885 (AENQLDDGHSSDQNHSPMVRDERK) is disordered. Residues 867 to 885 (DDGHSSDQNHSPMVRDERK) show a composition bias toward basic and acidic residues. Positions 892, 894, 903, and 904 each coordinate Zn(2+).

This sequence belongs to the SecA family. As to quaternary structure, monomer and homodimer. Part of the essential Sec protein translocation apparatus which comprises SecA, SecYEG and auxiliary proteins SecDF-YajC and YidC. The cofactor is Zn(2+).

The protein resides in the cell inner membrane. The protein localises to the cytoplasm. It carries out the reaction ATP + H2O + cellular proteinSide 1 = ADP + phosphate + cellular proteinSide 2.. In terms of biological role, part of the Sec protein translocase complex. Interacts with the SecYEG preprotein conducting channel. Has a central role in coupling the hydrolysis of ATP to the transfer of proteins into and across the cell membrane, serving both as a receptor for the preprotein-SecB complex and as an ATP-driven molecular motor driving the stepwise translocation of polypeptide chains across the membrane. The sequence is that of Protein translocase subunit SecA from Aliivibrio salmonicida (strain LFI1238) (Vibrio salmonicida (strain LFI1238)).